The chain runs to 413 residues: Zona pellucida-like domain-containing protein 1 (413 aa).

An N-terminal signal peptide occupies residues 1 to 19 (MEQICLIILLISKALSVGA). At Gln-20 the chain carries Pyrrolidone carboxylic acid. Topologically, residues 20–370 (QFNGYNCDAN…PVFRMNTVTS (351 aa)) are extracellular. One can recognise a ZP domain in the interval 43–320 (YCGVQTITLK…PICGSRKKRD (278 aa)). Disulfide bonds link Cys-44/Cys-155 and Cys-79/Cys-104. N-linked (GlcNAc...) asparagine glycosylation is found at Asn-85, Asn-121, Asn-129, Asn-164, Asn-181, and Asn-194. 2 disulfide bridges follow: Cys-235/Cys-296 and Cys-255/Cys-313. Residue Asn-351 is glycosylated (N-linked (GlcNAc...) asparagine). Residues 371–391 (ALISGIIILGVMSLCFFILSL) traverse the membrane as a helical segment. Residues 392-413 (TLLKGKRAPPTILSGARNPAFN) are Cytoplasmic-facing.

Proteolytically cleaved before the transmembrane segment to yield the secreted form found in the extracellular matrix of the cupula. Post-translationally, N-glycosylated. Detected in the acellular cupulae of the vestibular organ, and also in support cells adjacent to the cupula (at protein level).

The protein resides in the cytoplasmic vesicle membrane. It localises to the secreted. The protein localises to the extracellular space. Its subcellular location is the extracellular matrix. Its function is as follows. Glycoprotein which is a component of the gelatinous extracellular matrix in the cupulae of the vestibular organ. The chain is Zona pellucida-like domain-containing protein 1 from Salmo salar (Atlantic salmon).